Consider the following 1517-residue polypeptide: DNA-directed RNA polymerase subunit beta' (1517 aa).

4 residues coordinate Zn(2+): Cys-71, Cys-73, Cys-86, and Cys-89. Residues Asp-482, Asp-484, and Asp-486 each coordinate Mg(2+). Zn(2+)-binding residues include Cys-812, Cys-886, Cys-893, and Cys-896.

Belongs to the RNA polymerase beta' chain family. As to quaternary structure, the RNAP catalytic core consists of 2 alpha, 1 beta, 1 beta' and 1 omega subunit. When a sigma factor is associated with the core the holoenzyme is formed, which can initiate transcription. It depends on Mg(2+) as a cofactor. Zn(2+) serves as cofactor.

It carries out the reaction RNA(n) + a ribonucleoside 5'-triphosphate = RNA(n+1) + diphosphate. In terms of biological role, DNA-dependent RNA polymerase catalyzes the transcription of DNA into RNA using the four ribonucleoside triphosphates as substrates. The chain is DNA-directed RNA polymerase subunit beta' from Campylobacter jejuni subsp. jejuni serotype O:6 (strain 81116 / NCTC 11828).